We begin with the raw amino-acid sequence, 351 residues long: Protein-glutamate methylesterase/protein-glutamine glutaminase (351 aa).

Residues 3–120 enclose the Response regulatory domain; it reads KTLVVDDSAL…EISKIENELV (118 aa). Asp54 is modified (4-aspartylphosphate). The 188-residue stretch at 160 to 347 folds into the CheB-type methylesterase domain; sequence ILIGSSTGGP…EQIVRMIEVK (188 aa). Active-site residues include Ser165, His192, and Asp289.

It belongs to the CheB family. In terms of processing, phosphorylated by CheA. Phosphorylation of the N-terminal regulatory domain activates the methylesterase activity.

Its subcellular location is the cytoplasm. The catalysed reaction is [protein]-L-glutamate 5-O-methyl ester + H2O = L-glutamyl-[protein] + methanol + H(+). It catalyses the reaction L-glutaminyl-[protein] + H2O = L-glutamyl-[protein] + NH4(+). Involved in chemotaxis. Part of a chemotaxis signal transduction system that modulates chemotaxis in response to various stimuli. Catalyzes the demethylation of specific methylglutamate residues introduced into the chemoreceptors (methyl-accepting chemotaxis proteins or MCP) by CheR. Also mediates the irreversible deamidation of specific glutamine residues to glutamic acid. The protein is Protein-glutamate methylesterase/protein-glutamine glutaminase of Methanococcoides burtonii (strain DSM 6242 / NBRC 107633 / OCM 468 / ACE-M).